A 478-amino-acid polypeptide reads, in one-letter code: Phosphoglycerate kinase 2, chloroplastic (478 aa).

The transit peptide at 1–74 (MASTAATAAL…GKGARGVITM (74 aa)) directs the protein to the chloroplast. S78 carries the post-translational modification Phosphoserine. (2R)-3-phosphoglycerate-binding residues include A96, D97, N99, R113, T135, H136, G138, R139, R194, H226, and R227. ADP is bound at residue G272. A CDP-binding site is contributed by G272. The AMP site is built by K274 and K278. ATP is bound at residue K278. G296 is an ADP binding site. G296 provides a ligand contact to CDP. AMP is bound by residues G297 and G369. ATP contacts are provided by G297 and G369. CDP is bound by residues G394 and F399. F399 contributes to the ADP binding site. E400 is a binding site for AMP. Positions 400, 431, and 432 each coordinate ATP. A Mg(2+)-binding site is contributed by D431.

This sequence belongs to the phosphoglycerate kinase family. As to quaternary structure, monomer. It depends on Mg(2+) as a cofactor.

The protein resides in the plastid. Its subcellular location is the chloroplast. It catalyses the reaction (2R)-3-phosphoglycerate + ATP = (2R)-3-phospho-glyceroyl phosphate + ADP. Its pathway is carbohydrate biosynthesis; Calvin cycle. The polypeptide is Phosphoglycerate kinase 2, chloroplastic (Arabidopsis thaliana (Mouse-ear cress)).